The sequence spans 229 residues: Large ribosomal subunit protein uL1 (229 aa).

Belongs to the universal ribosomal protein uL1 family. Part of the 50S ribosomal subunit.

Binds directly to 23S rRNA. The L1 stalk is quite mobile in the ribosome, and is involved in E site tRNA release. Functionally, protein L1 is also a translational repressor protein, it controls the translation of the L11 operon by binding to its mRNA. This chain is Large ribosomal subunit protein uL1, found in Mycoplasmopsis pulmonis (strain UAB CTIP) (Mycoplasma pulmonis).